Consider the following 435-residue polypeptide: tRNA(Ile)-lysidine synthase (435 aa).

Position 23–28 (23–28 (SGGMDS)) interacts with ATP.

Belongs to the tRNA(Ile)-lysidine synthase family.

It is found in the cytoplasm. The catalysed reaction is cytidine(34) in tRNA(Ile2) + L-lysine + ATP = lysidine(34) in tRNA(Ile2) + AMP + diphosphate + H(+). In terms of biological role, ligates lysine onto the cytidine present at position 34 of the AUA codon-specific tRNA(Ile) that contains the anticodon CAU, in an ATP-dependent manner. Cytidine is converted to lysidine, thus changing the amino acid specificity of the tRNA from methionine to isoleucine. This Xanthomonas campestris pv. campestris (strain 8004) protein is tRNA(Ile)-lysidine synthase.